The following is a 292-amino-acid chain: Ribosomal RNA small subunit methyltransferase A (292 aa).

S-adenosyl-L-methionine-binding residues include asparagine 29, leucine 31, glycine 56, glutamate 77, aspartate 102, and asparagine 127.

It belongs to the class I-like SAM-binding methyltransferase superfamily. rRNA adenine N(6)-methyltransferase family. RsmA subfamily.

The protein resides in the cytoplasm. The catalysed reaction is adenosine(1518)/adenosine(1519) in 16S rRNA + 4 S-adenosyl-L-methionine = N(6)-dimethyladenosine(1518)/N(6)-dimethyladenosine(1519) in 16S rRNA + 4 S-adenosyl-L-homocysteine + 4 H(+). Its function is as follows. Specifically dimethylates two adjacent adenosines (A1518 and A1519) in the loop of a conserved hairpin near the 3'-end of 16S rRNA in the 30S particle. May play a critical role in biogenesis of 30S subunits. The protein is Ribosomal RNA small subunit methyltransferase A of Bacillus licheniformis (strain ATCC 14580 / DSM 13 / JCM 2505 / CCUG 7422 / NBRC 12200 / NCIMB 9375 / NCTC 10341 / NRRL NRS-1264 / Gibson 46).